Consider the following 29-residue polypeptide: Chassatide C10 (29 aa).

The cyclopeptide (Gly-Asn) cross-link spans 1–29 (GEYCGESCYLIPCFTPGCYCVSRQCVNKN). Cystine bridges form between Cys-4–Cys-18, Cys-8–Cys-20, and Cys-13–Cys-25.

Post-translationally, this is a cyclic peptide.

Functionally, probably participates in a plant defense mechanism. Has no activity against bacteria up to a concentration of 80 uM. Has cytotoxic but no hemolytic activity. The sequence is that of Chassatide C10 from Chassalia chartacea (Chassalia curviflora).